Consider the following 445-residue polypeptide: Alpha/beta hydrolase psoB (445 aa).

Ser246 serves as the catalytic Nucleophile.

The protein belongs to the AB hydrolase superfamily. FUS2 hydrolase family. As to quaternary structure, homodimer.

It participates in secondary metabolite biosynthesis. Functionally, alpha/beta hydrolase; part of the gene cluster that mediates the biosynthesis of pseurotin A, a competitive inhibitor of chitin synthase and an inducer of nerve-cell proliferation. The PKS-NRPS hybrid synthetase psoA is responsible for the biosynthesis of azaspirene, one of the first intermediates having the 1-oxa-7-azaspiro[4,4]-non-2-ene-4,6-dione core of pseurotin, via condensation of one acetyl-CoA, 4 malonyl-CoA, and a L-phenylalanine molecule. The dual-functional monooxygenase/methyltransferase psoF seems to be involved in the addition of the C3 methyl group onto the pseurotin scaffold. Azaspirene is then converted to synerazol through 4 steps including oxidation of C17 by the cytochrome P450 monooxygenase psoD, O-methylation of the hydroxy group of C8 by the methyltransferase psoC, and the trans-to-cis isomerization of the C13 olefin by the glutathione S-transferase psoE. The fourth step of synerazol production is performed by the dual-functional monooxygenase/methyltransferase psoF which seems to catalyze the epoxidation of the intermediate deepoxy-synerazol. Synerazol can be attacked by a water molecule nonenzymatically at two different positions to yield two diol products, pseurotin A and pseurotin D. The sequence is that of Alpha/beta hydrolase psoB from Aspergillus fumigatus (strain ATCC MYA-4609 / CBS 101355 / FGSC A1100 / Af293) (Neosartorya fumigata).